Reading from the N-terminus, the 379-residue chain is Chaperone protein DnaJ (379 aa).

The J domain occupies 5–70; sequence DYYEILGVPK…QKRAAYDQYG (66 aa). The CR-type zinc-finger motif lies at 134 to 212; the sequence is GVTKEIRIPT…CHGHGRIEKT (79 aa). Residues Cys-147, Cys-150, Cys-164, Cys-167, Cys-186, Cys-189, Cys-200, and Cys-203 each coordinate Zn(2+). 4 CXXCXGXG motif repeats span residues 147–154, 164–171, 186–193, and 200–207; these read CEVCHGSG, CPTCHGAG, CPHCQGRG, and CNSCHGHG.

The protein belongs to the DnaJ family. In terms of assembly, homodimer. Zn(2+) is required as a cofactor.

The protein resides in the cytoplasm. Functionally, participates actively in the response to hyperosmotic and heat shock by preventing the aggregation of stress-denatured proteins and by disaggregating proteins, also in an autonomous, DnaK-independent fashion. Unfolded proteins bind initially to DnaJ; upon interaction with the DnaJ-bound protein, DnaK hydrolyzes its bound ATP, resulting in the formation of a stable complex. GrpE releases ADP from DnaK; ATP binding to DnaK triggers the release of the substrate protein, thus completing the reaction cycle. Several rounds of ATP-dependent interactions between DnaJ, DnaK and GrpE are required for fully efficient folding. Also involved, together with DnaK and GrpE, in the DNA replication of plasmids through activation of initiation proteins. This Cronobacter sakazakii (strain ATCC BAA-894) (Enterobacter sakazakii) protein is Chaperone protein DnaJ.